The following is a 211-amino-acid chain: Uracil phosphoribosyltransferase (211 aa).

Residues Arg-77, Arg-102, and 129–137 each bind 5-phospho-alpha-D-ribose 1-diphosphate; that span reads DPMLATGGS. Uracil contacts are provided by residues Ile-192 and 197–199; that span reads GDA. Asp-198 contributes to the 5-phospho-alpha-D-ribose 1-diphosphate binding site.

This sequence belongs to the UPRTase family. Mg(2+) is required as a cofactor.

The catalysed reaction is UMP + diphosphate = 5-phospho-alpha-D-ribose 1-diphosphate + uracil. Its pathway is pyrimidine metabolism; UMP biosynthesis via salvage pathway; UMP from uracil: step 1/1. With respect to regulation, allosterically activated by GTP. Functionally, catalyzes the conversion of uracil and 5-phospho-alpha-D-ribose 1-diphosphate (PRPP) to UMP and diphosphate. This is Uracil phosphoribosyltransferase from Corynebacterium diphtheriae (strain ATCC 700971 / NCTC 13129 / Biotype gravis).